The chain runs to 732 residues: E3 ubiquitin-protein ligase hel2 (732 aa).

The tract at residues 1–48 (MSPSGPNLNNKEHNRASEKKNSRTHNKKTNRNQSKEKPVSSRSVETPK) is disordered. Residues 10 to 21 (NKEHNRASEKKN) show a composition bias toward basic and acidic residues. The segment at 81–121 (CFICAEGITYSCVLPCNHRMCHVCALRLRALYKTKECTFCK) adopts an RING-type zinc-finger fold. Residues 245–315 (PKCEFCNTHF…RECLERKFVV (71 aa)) form the LIM zinc-binding domain. Disordered regions lie at residues 345–380 (IIPQ…NETA), 411–501 (DFGF…QHQQ), and 623–732 (HDGP…FHIG). Polar residues-rich tracts occupy residues 366–380 (SSTP…NETA) and 415–433 (TLSN…TRTI). A compositionally biased stretch (low complexity) spans 457–468 (SSSAPSVPVSAP). Serine 482 carries the phosphoserine modification. Polar residues-rich tracts occupy residues 490-501 (PMASSEQAQHQQ) and 629-654 (SAPS…NTPS). Over residues 701–713 (STPNTSSNRNSNT) the composition is skewed to low complexity.

This sequence belongs to the ZNF598/HEL2 family.

It localises to the cytoplasm. The catalysed reaction is S-ubiquitinyl-[E2 ubiquitin-conjugating enzyme]-L-cysteine + [acceptor protein]-L-lysine = [E2 ubiquitin-conjugating enzyme]-L-cysteine + N(6)-ubiquitinyl-[acceptor protein]-L-lysine.. It participates in protein modification; protein ubiquitination. E3 ubiquitin-protein ligase that plays a key role in the ribosome quality control (RQC), a pathway that takes place when a ribosome has stalled during translation, leading to degradation of nascent peptide chains. Activated when ribosomes are stalled within an mRNA following translation of prematurely polyadenylated mRNAs. Acts as a ribosome collision sensor: specifically recognizes and binds collided ribosome and ubiquitinates the 40S ribosomal proteins rps20/uS10 and rps3/uS3. Catalyzes 'Lys-63'-linked polyubiquitination of rps20/uS10, promoting recruitment of the RQT (ribosome quality control trigger) complex, which drives the disassembly of stalled ribosomes, followed by degradation of nascent peptides. This chain is E3 ubiquitin-protein ligase hel2, found in Schizosaccharomyces pombe (strain 972 / ATCC 24843) (Fission yeast).